The chain runs to 803 residues: Translation initiation factor IF-2 (803 aa).

2 disordered regions span residues 93–123 and 138–206; these read TKPV…LNEK and EVKE…ASAK. A compositionally biased stretch (polar residues) spans 111-121; it reads VPPTSDTTNLN. Residues 138 to 155 are compositionally biased toward basic and acidic residues; it reads EVKEEAKKTPSEKKETPK. Over residues 156 to 167 the composition is skewed to basic residues; it reads KGPRKETRRSRK. Residues 168-188 are compositionally biased toward basic and acidic residues; sequence PDKEDKWEREELHMTKLVEER. Residues 302-471 form the tr-type G domain; sequence PRAPVVTIMG…LLQAEVLELK (170 aa). The interval 311 to 318 is G1; that stretch reads GHVDHGKT. Residue 311–318 participates in GTP binding; sequence GHVDHGKT. Positions 336 to 340 are G2; it reads GITQH. A G3 region spans residues 357–360; it reads DTPG. GTP-binding positions include 357 to 361 and 411 to 414; these read DTPGH and NKID. Residues 411–414 are G4; that stretch reads NKID. The interval 447–449 is G5; that stretch reads SAK.

It belongs to the TRAFAC class translation factor GTPase superfamily. Classic translation factor GTPase family. IF-2 subfamily.

Its subcellular location is the cytoplasm. One of the essential components for the initiation of protein synthesis. Protects formylmethionyl-tRNA from spontaneous hydrolysis and promotes its binding to the 30S ribosomal subunits. Also involved in the hydrolysis of GTP during the formation of the 70S ribosomal complex. The sequence is that of Translation initiation factor IF-2 from Coxiella burnetii (strain RSA 493 / Nine Mile phase I).